The following is a 204-amino-acid chain: Lymphotoxin-alpha (204 aa).

Positions 1 to 33 (MTPPGRLYLRRVCSTPILLLLGLLLALPPEAQG) are cleaved as a signal peptide. The region spanning 62-204 (PAAHLVGDPS…SSVFFGAFAL (143 aa)) is the THD domain. Residue Asn95 is glycosylated (N-linked (GlcNAc...) asparagine). Cys119 and Cys155 form a disulfide bridge.

Belongs to the tumor necrosis factor family. As to quaternary structure, homotrimer, and heterotrimer of either two LTB and one LTA subunits or (less prevalent) two LTA and one LTB subunits. Interacts with TNFRSF14.

Its subcellular location is the secreted. The protein localises to the membrane. Functionally, cytokine that in its homotrimeric form binds to TNFRSF1A/TNFR1, TNFRSF1B/TNFBR and TNFRSF14/HVEM. In its heterotrimeric form with LTB binds to TNFRSF3/LTBR. Lymphotoxin is produced by lymphocytes and is cytotoxic for a wide range of tumor cells in vitro and in vivo. In Sus scrofa (Pig), this protein is Lymphotoxin-alpha (LTA).